Here is a 506-residue protein sequence, read N- to C-terminus: Methylthioalkylmalate synthase 2, chloroplastic (506 aa).

The transit peptide at 1-49 directs the protein to the chloroplast; sequence MASSLLTSSGMIPTTGSTVVGRSVLPFQSSLHSLRLTHSYKNPALFISC. Positions 85 to 359 constitute a Pyruvate carboxyltransferase domain; that stretch reads VRVFDTTLRD…YTRIDTRQIM (275 aa).

It belongs to the alpha-IPM synthase/homocitrate synthase family.

It is found in the plastid. It localises to the chloroplast. It catalyses the reaction an omega-(methylsulfanyl)-2-oxoalkanoate + acetyl-CoA + H2O = a 2-(omega-methylsulfanyl)alkylmalate + CoA + H(+). In terms of biological role, catalyzes only the first methionine chain elongation cycle. The polypeptide is Methylthioalkylmalate synthase 2, chloroplastic (MAM2) (Arabidopsis thaliana (Mouse-ear cress)).